The chain runs to 557 residues: Vanadium-dependent bromoperoxidase (557 aa).

Gln1 bears the Pyrrolidone carboxylic acid mark. The disordered stretch occupies residues 1 to 22 (QTCSTSDDADDPTPPNERDDEA). Cys77 and Cys86 form a disulfide bridge. Vanadate contacts are provided by Lys341 and Arg349. The active site involves His411. Ser416, Gly417, and His418 together coordinate vanadate. His418 is a catalytic residue. Cys441 and Cys462 are joined by a disulfide. Arg480 and His486 together coordinate vanadate. Cys544 and Cys555 are disulfide-bonded.

Belongs to the vanadium-dependent haloperoxidase family. As to quaternary structure, homodimer; disulfide-linked. Requires vanadate as cofactor.

The catalysed reaction is RH + Br(-) + H2O2 = RBr + 2 H2O.. In terms of biological role, catalyzes the halogenation of organic substrates in the presence of hydrogen peroxide. This is Vanadium-dependent bromoperoxidase from Ascophyllum nodosum (Knotted wrack).